The chain runs to 83 residues: Apolipoprotein C-I (83 aa).

Positions 1-26 (MRLILSLPVLAVVLAMVLEGPAPAQA) are cleaved as a signal peptide.

It belongs to the apolipoprotein C1 family.

It is found in the secreted. Functionally, inhibitor of lipoprotein binding to the low density lipoprotein (LDL) receptor, LDL receptor-related protein, and very low density lipoprotein (VLDL) receptor. Associates with high density lipoproteins (HDL) and the triacylglycerol-rich lipoproteins in the plasma and makes up about 10% of the protein of the VLDL and 2% of that of HDL. Appears to interfere directly with fatty acid uptake and is also the major plasma inhibitor of cholesteryl ester transfer protein (CETP). Binds free fatty acids and reduces their intracellular esterification. Modulates the interaction of APOE with beta-migrating VLDL and inhibits binding of beta-VLDL to the LDL receptor-related protein. This chain is Apolipoprotein C-I (APOC1), found in Rousettus aegyptiacus (Egyptian fruit bat).